Here is a 209-residue protein sequence, read N- to C-terminus: Large ribosomal subunit protein bL25 (209 aa).

Disordered stretches follow at residues 1–20 and 190–209; these read MSKS…KGSS and LDVS…TQTS. Residues 8–20 are compositionally biased toward basic and acidic residues; sequence KAEKRERVGKGSS. Positions 192-209 are enriched in acidic residues; sequence VSDETSEQEKDEGETQTS.

It belongs to the bacterial ribosomal protein bL25 family. CTC subfamily. As to quaternary structure, part of the 50S ribosomal subunit; part of the 5S rRNA/L5/L18/L25 subcomplex. Contacts the 5S rRNA. Binds to the 5S rRNA independently of L5 and L18.

Its function is as follows. This is one of the proteins that binds to the 5S RNA in the ribosome where it forms part of the central protuberance. The polypeptide is Large ribosomal subunit protein bL25 (Bartonella tribocorum (strain CIP 105476 / IBS 506)).